The sequence spans 86 residues: Small ribosomal subunit protein bS20 (86 aa).

Residues Met-1–Arg-16 are compositionally biased toward basic and acidic residues. The interval Met-1–Lys-25 is disordered.

Belongs to the bacterial ribosomal protein bS20 family.

In terms of biological role, binds directly to 16S ribosomal RNA. The chain is Small ribosomal subunit protein bS20 from Mycobacterium sp. (strain JLS).